The primary structure comprises 249 residues: ATP synthase subunit a, chloroplastic (249 aa).

5 consecutive transmembrane segments (helical) span residues 40 to 60 (QVLI…VLAI), 97 to 117 (VPFI…GALL), 136 to 156 (INTT…AGLS), 201 to 221 (LVVV…VMFL), and 222 to 242 (GLFT…AYIG).

This sequence belongs to the ATPase A chain family. As to quaternary structure, F-type ATPases have 2 components, CF(1) - the catalytic core - and CF(0) - the membrane proton channel. CF(1) has five subunits: alpha(3), beta(3), gamma(1), delta(1), epsilon(1). CF(0) has four main subunits: a, b, b' and c.

The protein localises to the plastid. The protein resides in the chloroplast thylakoid membrane. Its function is as follows. Key component of the proton channel; it plays a direct role in the translocation of protons across the membrane. This chain is ATP synthase subunit a, chloroplastic, found in Lepidium virginicum (Virginia pepperweed).